The chain runs to 423 residues: T-box protein 2 (423 aa).

Residues 70 to 243 (LWQQFSQCGT…NNPFAKGFRD (174 aa)) constitute a DNA-binding region (T-box). Disordered regions lie at residues 238–324 (AKGF…PLRS) and 384–423 (VEAT…LSKP). Polar residues predominate over residues 261–283 (DATQSPPGKTASLPTHSPHPSES). The span at 302 to 317 (TPTTSSLSTSTTPTLS) shows a compositional bias: low complexity. Positions 394–404 (AEKPEVKKEQK) are enriched in basic and acidic residues.

Post-translationally, sumoylated. In terms of tissue distribution, expressed in body wall muscles and a subset of pharyngeal neurons. Expressed in head neurons and occassionally tail neurons. Not expressed in the pharynx.

Its subcellular location is the nucleus. Involved in the transcriptional regulation of genes required for the development of pharyngeal muscles derived from the ABa lineage. Acts as a transcriptional repressor and binds to T-box binding sites in its own promoter to negatively autoregulate its own expression in neurons, seam cells and the gut in order to restrict its expression to certain tissues. May function together with the nfya-1-NF-Y complex to repress its own expression. Plays a role in neural fate specification in the hermaphrodite-specific neuron (HSN)/PHB neuron lineage, acting in concert with homeobox protein egl-5 and the asymmetric cell division protein ham-1. This chain is T-box protein 2, found in Caenorhabditis elegans.